A 249-amino-acid chain; its full sequence is Metallo-beta-lactamase type 2 (249 aa).

The first 18 residues, 1 to 18 (MKTVFILISMLFPVAVMA), serve as a signal peptide directing secretion. Zn(2+) is bound by residues His-99, His-101, Asp-103, His-162, and Cys-181. Positions 184 and 193 each coordinate substrate. Residue His-223 participates in Zn(2+) binding.

This sequence belongs to the metallo-beta-lactamase superfamily. Class-B beta-lactamase family. Monomer. The cofactor is Zn(2+).

It is found in the periplasm. The catalysed reaction is a beta-lactam + H2O = a substituted beta-amino acid. Competitively inhibited by 4-morpholineethanesulfonic acid (MES), SB236050 and biphenyl tetrazoles (BPTs). Also inhibited by chelating agents such as EDTA and 1,10-phenanthroline. CcrA is not susceptible to inactivation by the beta-lactamase-blocking agents clavulanic acid or tazobactam. Its function is as follows. Confers resistance to the different beta-lactams antibiotics (penicillin, cephalosporin and carbapenem) via the hydrolysis of the beta-lactam ring. This Bacteroides fragilis protein is Metallo-beta-lactamase type 2.